Reading from the N-terminus, the 349-residue chain is Methylthioribose-1-phosphate isomerase (349 aa).

Residues 49-51 (RGA), arginine 92, and glutamine 199 each bind substrate. The active-site Proton donor is aspartate 240. Residue 250–251 (NK) coordinates substrate.

The protein belongs to the eIF-2B alpha/beta/delta subunits family. MtnA subfamily.

The enzyme catalyses 5-(methylsulfanyl)-alpha-D-ribose 1-phosphate = 5-(methylsulfanyl)-D-ribulose 1-phosphate. It participates in amino-acid biosynthesis; L-methionine biosynthesis via salvage pathway; L-methionine from S-methyl-5-thio-alpha-D-ribose 1-phosphate: step 1/6. In terms of biological role, catalyzes the interconversion of methylthioribose-1-phosphate (MTR-1-P) into methylthioribulose-1-phosphate (MTRu-1-P). This Syntrophobacter fumaroxidans (strain DSM 10017 / MPOB) protein is Methylthioribose-1-phosphate isomerase.